The chain runs to 105 residues: MMLKPSIDTLLDKVPSKYSLVILQAKRAHELEAGAKATQSFKSVKSTLRALEEIESGNVVIHPDPSAKRAAVRAKIEADRLAKEEEERKIKEQIAKEKEEEGEKI.

Belongs to the RNA polymerase subunit omega family. In terms of assembly, the RNAP catalytic core consists of 2 alpha, 1 beta, 1 beta' and 1 omega subunit. When a sigma factor is associated with the core the holoenzyme is formed, which can initiate transcription.

It catalyses the reaction RNA(n) + a ribonucleoside 5'-triphosphate = RNA(n+1) + diphosphate. In terms of biological role, promotes RNA polymerase assembly. Latches the N- and C-terminal regions of the beta' subunit thereby facilitating its interaction with the beta and alpha subunits. This Streptococcus uberis (strain ATCC BAA-854 / 0140J) protein is DNA-directed RNA polymerase subunit omega.